Reading from the N-terminus, the 444-residue chain is Trigger factor (444 aa).

A PPIase FKBP-type domain is found at glycine 165–proline 250.

The protein belongs to the FKBP-type PPIase family. Tig subfamily.

The protein resides in the cytoplasm. It carries out the reaction [protein]-peptidylproline (omega=180) = [protein]-peptidylproline (omega=0). Functionally, involved in protein export. Acts as a chaperone by maintaining the newly synthesized protein in an open conformation. Functions as a peptidyl-prolyl cis-trans isomerase. The protein is Trigger factor of Campylobacter jejuni subsp. jejuni serotype O:23/36 (strain 81-176).